A 371-amino-acid polypeptide reads, in one-letter code: LIM domain-binding protein 2 (371 aa).

2 disordered regions span residues 244–289 (APPA…AAAN) and 325–371 (QYDA…QASQ). Over residues 263–289 (STSSTSNSSAGNNANSTNSKKKSAAAN) the composition is skewed to low complexity. One can recognise an LIM interaction domain (LID) domain in the interval 296–335 (DVMVVGEPTLMGGEFGDEDERLITRLENTQYDAANGMDDE). Polar residues predominate over residues 339-371 (NNSPALGNNSPWNSKPPANQETKSENPTPQASQ).

The protein belongs to the LDB family. In terms of tissue distribution, first expressed at stages 15-16 in presumptive limb mesoderm. As limb outgrowth proceeds, expressed in the entire limb bud, concentrating in the distal mesoderm throughout limb development. Both hindlimbs and forelimbs exhibit similar expression patterns.

The protein localises to the nucleus. Functionally, binds to the LIM domain of a wide variety of LIM domain-containing transcription factors. This chain is LIM domain-binding protein 2 (LDB2), found in Gallus gallus (Chicken).